Consider the following 414-residue polypeptide: tRNA (guanine-N(7)-)-methyltransferase non-catalytic subunit WDR4 (414 aa).

A2 is subject to N-acetylalanine. WD repeat units follow at residues 60 to 99, 101 to 140, 144 to 184, and 187 to 227; these read QGSD…CLSV, TVVR…GGGR, GHLS…IESF, and GHTE…ELHC. Positions 377-414 are disordered; the sequence is EERLQQQLEKKRRQAPPPGPNGPTKKMRAGELAQGCSS.

Belongs to the WD repeat TRM82 family. In terms of assembly, non-catalytic component of the METTL1-WDR4 complex, composed of METTL1 and WDR4. Interacts with FEN1; the interaction is direct.

The protein localises to the nucleus. It localises to the chromosome. The protein operates within tRNA modification; N(7)-methylguanine-tRNA biosynthesis. Its function is as follows. Non-catalytic component of the METTL1-WDR4 methyltransferase complex required for the formation of N(7)-methylguanine in a subset of RNA species, such as tRNAs, mRNAs and microRNAs (miRNAs). In the METTL1-WDR4 methyltransferase complex, WDR4 acts as a scaffold for tRNA-binding. Required for the formation of N(7)-methylguanine at position 46 (m7G46) in a large subset of tRNAs that contain the 5'-RAGGU-3' motif within the variable loop. M7G46 interacts with C13-G22 in the D-loop to stabilize tRNA tertiary structure and protect tRNAs from decay. Also required for the formation of N(7)-methylguanine at internal sites in a subset of mRNAs. Also required for methylation of a specific subset of miRNAs, such as let-7. Independently of METTL1, also plays a role in genome stability: localizes at the DNA replication site and regulates endonucleolytic activities of FEN1. The chain is tRNA (guanine-N(7)-)-methyltransferase non-catalytic subunit WDR4 from Bos taurus (Bovine).